A 588-amino-acid chain; its full sequence is Arginine--tRNA ligase (588 aa).

The 'HIGH' region signature appears at 126 to 136 (PNIAKEMHVGH).

It belongs to the class-I aminoacyl-tRNA synthetase family. In terms of assembly, monomer.

It localises to the cytoplasm. The enzyme catalyses tRNA(Arg) + L-arginine + ATP = L-arginyl-tRNA(Arg) + AMP + diphosphate. This Nostoc sp. (strain PCC 7120 / SAG 25.82 / UTEX 2576) protein is Arginine--tRNA ligase.